We begin with the raw amino-acid sequence, 385 residues long: Methionine aminopeptidase 1 (385 aa).

The C6H2-type zinc-finger motif lies at 6–59 (SRVCETEGCSSEAKLQCPTCIKLGIQGSYFCSQECFKGSWASHKLLHKKAKDDK). Zn(2+)-binding residues include cysteine 9, cysteine 14, cysteine 22, cysteine 25, cysteine 36, cysteine 40, histidine 48, and histidine 52. An a protein-binding site is contributed by histidine 203. Positions 220, 231, and 294 each coordinate Zn(2+). Residue histidine 301 participates in a protein binding. Zn(2+)-binding residues include glutamate 327 and glutamate 358.

It belongs to the peptidase M24A family. Methionine aminopeptidase type 1 subfamily. In terms of assembly, associates with the 60S ribosomal subunit of the 80S translational complex. It depends on Zn(2+) as a cofactor. The cofactor is Co(2+). Mn(2+) serves as cofactor. Requires Fe(2+) as cofactor.

Its subcellular location is the cytoplasm. It catalyses the reaction Release of N-terminal amino acids, preferentially methionine, from peptides and arylamides.. Its function is as follows. Cotranslationally removes the N-terminal methionine from nascent proteins. The N-terminal methionine is often cleaved when the second residue in the primary sequence is small and uncharged (Met-Ala-, Cys, Gly, Pro, Ser, Thr, or Val). The chain is Methionine aminopeptidase 1 (metap1) from Xenopus tropicalis (Western clawed frog).